Here is a 114-residue protein sequence, read N- to C-terminus: Iron-sulfur cluster insertion protein ErpA (114 aa).

Iron-sulfur cluster-binding residues include cysteine 42, cysteine 106, and cysteine 108.

It belongs to the HesB/IscA family. As to quaternary structure, homodimer. The cofactor is iron-sulfur cluster.

Required for insertion of 4Fe-4S clusters for at least IspG. The polypeptide is Iron-sulfur cluster insertion protein ErpA (Klebsiella pneumoniae subsp. pneumoniae (strain ATCC 700721 / MGH 78578)).